The chain runs to 182 residues: Large ribosomal subunit protein uL10 (182 aa).

It belongs to the universal ribosomal protein uL10 family. Part of the ribosomal stalk of the 50S ribosomal subunit. The N-terminus interacts with L11 and the large rRNA to form the base of the stalk. The C-terminus forms an elongated spine to which L12 dimers bind in a sequential fashion forming a multimeric L10(L12)X complex.

Its function is as follows. Forms part of the ribosomal stalk, playing a central role in the interaction of the ribosome with GTP-bound translation factors. The polypeptide is Large ribosomal subunit protein uL10 (Microcystis aeruginosa (strain NIES-843 / IAM M-2473)).